The chain runs to 198 residues: V-type proton ATPase subunit E (198 aa).

It belongs to the V-ATPase E subunit family.

Produces ATP from ADP in the presence of a proton gradient across the membrane. This chain is V-type proton ATPase subunit E, found in Borrelia recurrentis (strain A1).